Reading from the N-terminus, the 475-residue chain is Rho GTPase-activating protein 15 (475 aa).

Over residues 1-22 the composition is skewed to polar residues; sequence MQKSTNSDTSVETLNSTRQGTG. Positions 1–23 are disordered; sequence MQKSTNSDTSVETLNSTRQGTGA. Residues Ser43, Ser103, Ser196, Ser199, and Ser243 each carry the phosphoserine modification. A PH domain is found at 79–189; sequence MVEKEGYLQK…WFHAIKNAID (111 aa). The Rho-GAP domain occupies 281–470; sequence SHLHKVCERE…LMLSEYSKIF (190 aa).

In terms of tissue distribution, expressed in lung, liver and lymphoid cells.

The protein localises to the cytoplasm. It localises to the membrane. GTPase activator for the Rho-type GTPases by converting them to an inactive GDP-bound state. Has activity toward RAC1. Overexpression results in an increase in actin stress fibers and cell contraction. The polypeptide is Rho GTPase-activating protein 15 (ARHGAP15) (Homo sapiens (Human)).